The primary structure comprises 190 residues: Prostaglandin-H2 D-isomerase (190 aa).

Residues 1 to 22 (MATHHTLWMGLALLGVLGDLQA) form the signal peptide. An O-linked (GalNAc...) serine glycan is attached at serine 29. Residue asparagine 51 is glycosylated (N-linked (GlcNAc...) (complex) asparagine). The active-site Nucleophile is cysteine 65. An N-linked (GlcNAc...) (complex) asparagine glycan is attached at asparagine 78. An intrachain disulfide couples cysteine 89 to cysteine 186.

Belongs to the calycin superfamily. Lipocalin family. Monomer. In terms of processing, N- and O-glycosylated. Both N-glycosylation recognition sites are almost quantitatively occupied by N-glycans of the biantennary complex type, with a considerable proportion of structures bearing a bisecting GlcNAc. N-glycan at Asn-78: dHex1Hex5HexNAc4. Agalacto structure as well as sialylated and nonsialylated oligosaccharides bearing alpha2-3- and/or alpha2-6-linked NeuNAc are present. Abundant in the brain and CNS, where it is expressed in tissues of the blood-brain barrier and secreted into the cerebro-spinal fluid. Abundantly expressed in the heart. In the male reproductive system, it is expressed in the testis, epididymis and prostate, and is secreted into the seminal fluid. Expressed in the eye and secreted into the aqueous humor. Lower levels detected in various tissue fluids such as serum, normal urine, ascitic fluid and tear fluid. Also found in a number of other organs including ovary, fimbriae of the fallopian tubes, kidney, leukocytes.

Its subcellular location is the rough endoplasmic reticulum. It localises to the nucleus membrane. It is found in the golgi apparatus. The protein resides in the cytoplasm. The protein localises to the perinuclear region. Its subcellular location is the secreted. The catalysed reaction is prostaglandin H2 = prostaglandin D2. Catalyzes the conversion of PGH2 to PGD2, a prostaglandin involved in smooth muscle contraction/relaxation and a potent inhibitor of platelet aggregation. Involved in a variety of CNS functions, such as sedation, NREM sleep and PGE2-induced allodynia, and may have an anti-apoptotic role in oligodendrocytes. Binds small non-substrate lipophilic molecules, including biliverdin, bilirubin, retinal, retinoic acid and thyroid hormone, and may act as a scavenger for harmful hydrophobic molecules and as a secretory retinoid and thyroid hormone transporter. Possibly involved in development and maintenance of the blood-brain, blood-retina, blood-aqueous humor and blood-testis barrier. It is likely to play important roles in both maturation and maintenance of the central nervous system and male reproductive system. Involved in PLA2G3-dependent maturation of mast cells. PLA2G3 is secreted by immature mast cells and acts on nearby fibroblasts upstream to PTDGS to synthesize PGD2, which in turn promotes mast cell maturation and degranulation via PTGDR. In Homo sapiens (Human), this protein is Prostaglandin-H2 D-isomerase (PTGDS).